The chain runs to 132 residues: Large ribosomal subunit protein bL19 (132 aa).

This sequence belongs to the bacterial ribosomal protein bL19 family.

In terms of biological role, this protein is located at the 30S-50S ribosomal subunit interface and may play a role in the structure and function of the aminoacyl-tRNA binding site. In Methylobacterium radiotolerans (strain ATCC 27329 / DSM 1819 / JCM 2831 / NBRC 15690 / NCIMB 10815 / 0-1), this protein is Large ribosomal subunit protein bL19.